Reading from the N-terminus, the 372-residue chain is Oxoglutarate-dependent flavonoid 7-O-demethylase 1 (372 aa).

A Fe2OG dioxygenase domain is found at 221–321 (GIQALRMNYY…RLSVAAFLNP (101 aa)). Histidine 245, aspartate 247, and histidine 302 together coordinate Fe cation. Position 312 (arginine 312) interacts with 2-oxoglutarate.

This sequence belongs to the iron/ascorbate-dependent oxidoreductase family. Monomer. Fe(2+) serves as cofactor. The cofactor is L-ascorbate. As to expression, accumulates in the trichomes of nevadensin-accumulating strains (e.g. cv. SD and cv. EMX-1) and in cv. SW (at protein level) but not in cv. MC.

Its subcellular location is the cytoplasm. It carries out the reaction gardenin B + 2-oxoglutarate + O2 = nevadensin + formaldehyde + succinate + CO2 + H(+). The catalysed reaction is 8-hydroxysalvigenin + 2-oxoglutarate + O2 = pilosin + formaldehyde + succinate + CO2. Its pathway is flavonoid metabolism. With respect to regulation, inhibited by prohexadione-calcium, a 2-oxoglutarate-dependent dioxygenase (2-ODD) inhibitor, thus leading to a decreased abundance of nevadensin (NEV) and absence of pilosin (PIL) production, but to the accumulation of gardenin B (GARD B) and 8-hydroxysalvigenin (8-OH-SALV). In terms of biological role, oxoglutarate-dependent dioxygenase (2-ODD) acting as a flavonoid 7-O-demethylase involved in the biosynthesis of polymethoxylated flavonoids natural products such as nevadensin and salvigenin, aroma compounds which contribute to the flavor of sweet basil, and exhibit pharmacological activities such as anti-allergic, anti-oxidant, antibacterial, anti-proliferative, and anti-inflammatory effects. Catalyzes the 7-O-demethylation of methoxylated flavones; mediates the conversion of 8-hydroxysalvigenin (8-OH-SALV) to pilosin (PIL) and of gardenin B (GARD B) to nevadensin (NEV). The chain is Oxoglutarate-dependent flavonoid 7-O-demethylase 1 from Ocimum basilicum (Sweet basil).